The primary structure comprises 327 residues: Putative HTH-type transcriptional regulatory protein Mevan_1514 (327 aa).

The HTH cro/C1-type domain maps to 128 to 189; that stretch reads LKETREKLNI…IKGINITDYF (62 aa). A DNA-binding region (H-T-H motif) is located at residues 139–158; that stretch reads VGELAEFSRVSRKTIYKYEQ.

This Methanococcus vannielii (strain ATCC 35089 / DSM 1224 / JCM 13029 / OCM 148 / SB) protein is Putative HTH-type transcriptional regulatory protein Mevan_1514.